Reading from the N-terminus, the 89-residue chain is Neurotoxin beta-KTx 12 (89 aa).

The first 20 residues, 1–20 (MKQYIFFLALIVLVSTFAEA), serve as a signal peptide directing secretion. A propeptide spanning residues 21 to 39 (GKKTEILDKVKKVFSKAKD) is cleaved from the precursor. One can recognise a BetaSPN-type CS-alpha/beta domain in the interval 53–89 (ELGCPFIDKWCEDHCESKKLVGKCENFDCSCVKLGGK). 3 cysteine pairs are disulfide-bonded: C56–C76, C63–C81, and C67–C83.

The protein belongs to the long chain scorpion toxin family. Class 2 subfamily. In terms of tissue distribution, expressed by the venom gland.

The protein localises to the secreted. In terms of biological role, inhibits voltage-gated potassium channel. This chain is Neurotoxin beta-KTx 12, found in Lychas mucronatus (Chinese swimming scorpion).